Reading from the N-terminus, the 196-residue chain is Probable malonic semialdehyde reductase RutE (196 aa).

Belongs to the nitroreductase family. HadB/RutE subfamily. The cofactor is FMN.

It carries out the reaction 3-hydroxypropanoate + NADP(+) = 3-oxopropanoate + NADPH + H(+). Its function is as follows. May reduce toxic product malonic semialdehyde to 3-hydroxypropionic acid, which is excreted. The chain is Probable malonic semialdehyde reductase RutE from Cronobacter sakazakii (strain ATCC BAA-894) (Enterobacter sakazakii).